The primary structure comprises 930 residues: Protocadherin gamma-B6 (930 aa).

Residues 1 to 30 form the signal peptide; that stretch reads MGGSCAQRRRAGPRQVLFPLLLPFFYPTLC. 6 consecutive Cadherin domains span residues 31-133, 134-242, 243-347, 348-452, 453-562, and 570-675; these read EPIR…APQF, DKKE…PPVF, SRDE…SPEI, IITS…APVF, DQTS…APRV, and DGSA…LPDL. Topologically, residues 31–691 are extracellular; that stretch reads EPIRYSIPEE…SDPQAELQFY (661 aa). N-linked (GlcNAc...) asparagine glycans are attached at residues Asn304, Asn419, and Asn545. A helical membrane pass occupies residues 692–712; the sequence is LVVALALISVLFLLAVILAIA. The Cytoplasmic segment spans residues 713-930; that stretch reads LRLRRSLSPT…KKKSGKKEKK (218 aa). Disordered stretches follow at residues 791 to 839 and 900 to 930; these read PHGG…WPNN and ATLTNAAGKRDGKAPAGGNGNKKKSGKKEKK. The segment covering 800–839 has biased composition (polar residues); it reads HPETLTSQAPPNTDWRFSQAQRPGTSGSQNGDDTGTWPNN. Residues 920 to 930 show a composition bias toward basic residues; it reads NKKKSGKKEKK.

The protein localises to the cell membrane. Potential calcium-dependent cell-adhesion protein. May be involved in the establishment and maintenance of specific neuronal connections in the brain. In Pan troglodytes (Chimpanzee), this protein is Protocadherin gamma-B6 (PCDHGB6).